The chain runs to 120 residues: Large ribosomal subunit protein bL19 (120 aa).

This sequence belongs to the bacterial ribosomal protein bL19 family.

Its function is as follows. This protein is located at the 30S-50S ribosomal subunit interface and may play a role in the structure and function of the aminoacyl-tRNA binding site. This chain is Large ribosomal subunit protein bL19, found in Chlorobium luteolum (strain DSM 273 / BCRC 81028 / 2530) (Pelodictyon luteolum).